A 331-amino-acid chain; its full sequence is uncharacterized protein (331 aa).

Pentapeptide repeat domains follow at residues 20-59, 60-99, 100-139, 151-190, 191-230, 231-270, and 271-310; these read LKLP…NLGQ, ANLV…ILRD, SDMT…NMRQ, AILG…DLRK, ADLS…KISE, AEMT…DLSR, and ANLT…DLMS.

This is an uncharacterized protein from Synechocystis sp. (strain ATCC 27184 / PCC 6803 / Kazusa).